The following is a 499-amino-acid chain: Potassium voltage-gated channel subfamily A member 2 (499 aa).

Residues 1-27 (MTVATGEPADEAAALPGHPQDTYDPEA) form a disordered region. Positions 1–125 (MTVATGEPAD…YELGEEAMEM (125 aa)) are tetramerization domain. Residues 1–160 (MTVATGEPAD…LLFEYPESSG (160 aa)) lie on the Cytoplasmic side of the membrane. A helical transmembrane segment spans residues 161–182 (PARIIAIVSVMVILISIVSFCL). Topologically, residues 183-221 (ETLPIFRDENEDMHGGGVTFHTYSNSTIGYQQSTSFTDP) are extracellular. An N-linked (GlcNAc...) asparagine glycan is attached at Asn-207. Residues 222-243 (FFIVETLCIIWFSFEFLVRFFA) form a helical membrane-spanning segment. Cys-244 carries S-palmitoyl cysteine lipidation. Over 244-254 (CPSKAGFFTNI) the chain is Cytoplasmic. A helical membrane pass occupies residues 255–275 (MNIIDIVAIIPYFITLGTELA). Residues 276–289 (EKPEDAQQGQQAMS) lie on the Extracellular side of the membrane. The chain crosses the membrane as a helical; Voltage-sensor span at residues 290–310 (LAILRVIRLVRVFRIFKLSRH). Topologically, residues 311–325 (SKGLQILGQTLKASM) are cytoplasmic. The tract at residues 312-325 (KGLQILGQTLKASM) is S4-S5 linker. A helical membrane pass occupies residues 326–347 (RELGLLIFFLFIGVILFSSAVY). Over 348-361 (FAEADERESQFPSI) the chain is Extracellular. Positions 362–373 (PDAFWWAVVSMT) form an intramembrane region, helical. Positions 374–379 (TVGYGD) match the Selectivity filter motif. An intramembrane segment occupies 374–381 (TVGYGDMV). Over 382–388 (PTTIGGK) the chain is Extracellular. The helical transmembrane segment at 389–417 (IVGSLCAIAGVLTIALPVPVIVSNFNYFY) threads the bilayer. Topologically, residues 418 to 499 (HRETEGEEQA…VNITKMLTDV (82 aa)) are cytoplasmic. Tyr-429 bears the Phosphotyrosine mark. Phosphoserine is present on residues Ser-434, Ser-440, Ser-441, and Ser-449. Tyr-458 bears the Phosphotyrosine mark. Ser-468 carries the phosphoserine modification. The PDZ-binding signature appears at 497-499 (TDV).

The protein belongs to the potassium channel family. A (Shaker) (TC 1.A.1.2) subfamily. Kv1.2/KCNA2 sub-subfamily. In terms of assembly, homotetramer and heterotetramer with other channel-forming alpha subunits, such as KCNA1, KCNA4, KCNA5, KCNA6 and KCNA7. Channel activity is regulated by interaction with the beta subunits, including KCNAB1 and KCNAB2. Identified in a complex with KCNA1 and KCNAB2. Identified in a complex with KCNA5 and KCNAB1. Interacts with the beta subunit KCNAB1. Identified in a complex with KCNA4 and FYN. Interacts with PTK2B. Interacts (via C-terminus) with CTTN. Interacts (via N-terminal cytoplasmic domain) with RHOA (GTP-bound form); this regulates channel activity by reducing location at the cell surface in response to CHRM1 activation. Interacts with DRD2. Interacts with SIGMAR1; cocaine consumption leads to increased interaction. Interacts with ADAM22. Interacts with CNTNAP2. Interacts (via C-terminus) with the PDZ domains of DLG1, DLG2 and DLG4. Interacts with ADAM11. Interacts with LYNX1. Phosphorylated on tyrosine residues; phosphorylation increases in response to ischemia. Phosphorylated on tyrosine residues by activated PTK2B/PYK2. Phosphorylation on tyrosine residues suppresses ion channel activity. Phosphorylated on tyrosine residues in response to CHRM1 activation; this abolishes interaction with CTTN. This is probably due to endocytosis of the phosphorylated channel subunits. Phosphorylated on serine residues in response to increased cAMP levels; phosphorylation is apparently not catalyzed by PKA. Post-translationally, N-glycosylated, with complex, sialylated N-glycans. In terms of tissue distribution, expressed in a wide variety of gastrointestinal smooth muscles. Not expressed in portal vein, renal artery, and uterus.

The protein localises to the cell membrane. Its subcellular location is the membrane. It is found in the cell projection. It localises to the axon. The protein resides in the synapse. The protein localises to the presynaptic cell membrane. Its subcellular location is the synaptosome. It is found in the endoplasmic reticulum membrane. It localises to the dendrite. The protein resides in the lamellipodium membrane. The protein localises to the cell junction. Its subcellular location is the paranodal septate junction. It carries out the reaction K(+)(in) = K(+)(out). Its activity is regulated as follows. Inhibited by 4-aminopyridine (4-AP). Inhibited by dendrotoxin (DTX) and charybdotoxin (CTX), but not by tetraethylammonium (TEA). Inhibited by tityustoxin-K alpha (TsTX-Kalpha), a toxin that is highly specific for KCNA2. Inhibited by maurotoxin. Inhibited by kappaM conotoxins kappaM-RIIIJ and kappaM-RIIIK. Voltage-gated potassium channel that mediates transmembrane potassium transport in excitable membranes, primarily in the brain and the central nervous system, but also in the cardiovascular system. Prevents aberrant action potential firing and regulates neuronal output. Forms tetrameric potassium-selective channels through which potassium ions pass in accordance with their electrochemical gradient. The channel alternates between opened and closed conformations in response to the voltage difference across the membrane. Can form functional homotetrameric channels and heterotetrameric channels that contain variable proportions of KCNA1, KCNA2, KCNA4, KCNA5, KCNA6, KCNA7, and possibly other family members as well; channel properties depend on the type of alpha subunits that are part of the channel. Channel properties are modulated by cytoplasmic beta subunits that regulate the subcellular location of the alpha subunits and promote rapid inactivation of delayed rectifier potassium channels. In vivo, membranes probably contain a mixture of heteromeric potassium channel complexes, making it difficult to assign currents observed in intact tissues to any particular potassium channel family member. Homotetrameric KCNA2 forms a delayed-rectifier potassium channel that opens in response to membrane depolarization, followed by slow spontaneous channel closure. In contrast, a heteromultimer formed by KCNA2 and KCNA4 shows rapid inactivation. Regulates neuronal excitability and plays a role as pacemaker in the regulation of neuronal action potentials. KCNA2-containing channels play a presynaptic role and prevent hyperexcitability and aberrant action potential firing. Response to toxins that are selective for KCNA2-containing potassium channels suggests that in Purkinje cells, dendritic subthreshold KCNA2-containing potassium channels prevent random spontaneous calcium spikes, suppressing dendritic hyperexcitability without hindering the generation of somatic action potentials, and thereby play an important role in motor coordination. Plays a role in the induction of long-term potentiation of neuron excitability in the CA3 layer of the hippocampus. May function as down-stream effector for G protein-coupled receptors and inhibit GABAergic inputs to basolateral amygdala neurons. May contribute to the regulation of neurotransmitter release, such as gamma-aminobutyric acid (GABA). Contributes to the regulation of the axonal release of the neurotransmitter dopamine. Reduced KCNA2 expression plays a role in the perception of neuropathic pain after peripheral nerve injury, but not acute pain. Plays a role in the regulation of the time spent in non-rapid eye movement (NREM) sleep. This chain is Potassium voltage-gated channel subfamily A member 2 (KCNA2), found in Canis lupus familiaris (Dog).